Reading from the N-terminus, the 219-residue chain is Ribose-5-phosphate isomerase A (219 aa).

Residues 28 to 31, 81 to 84, and 94 to 97 contribute to the substrate site; these read TGST, DGAD, and KGGG. The Proton acceptor role is filled by E103. K121 provides a ligand contact to substrate.

The protein belongs to the ribose 5-phosphate isomerase family. As to quaternary structure, homodimer.

It catalyses the reaction aldehydo-D-ribose 5-phosphate = D-ribulose 5-phosphate. It participates in carbohydrate degradation; pentose phosphate pathway; D-ribose 5-phosphate from D-ribulose 5-phosphate (non-oxidative stage): step 1/1. Functionally, catalyzes the reversible conversion of ribose-5-phosphate to ribulose 5-phosphate. The protein is Ribose-5-phosphate isomerase A of Photobacterium profundum (strain SS9).